A 723-amino-acid polypeptide reads, in one-letter code: Polyribonucleotide nucleotidyltransferase (723 aa).

Mg(2+)-binding residues include aspartate 488 and aspartate 494. Positions 555 to 614 (PKIITLNIKPEKIKDVIGPGGKQINAIIEETGVKIDIEQDGTVYIASQDQAMNRKAIAII) constitute a KH domain. One can recognise an S1 motif domain in the interval 624–692 (GEVYTGKVRR…HQGRVNLSRK (69 aa)). The tract at residues 692–723 (KALLEKKEQPEGDKKPQAEKKFYPKTKKPESK) is disordered. Basic and acidic residues predominate over residues 693–723 (ALLEKKEQPEGDKKPQAEKKFYPKTKKPESK).

The protein belongs to the polyribonucleotide nucleotidyltransferase family. Requires Mg(2+) as cofactor.

The protein resides in the cytoplasm. It carries out the reaction RNA(n+1) + phosphate = RNA(n) + a ribonucleoside 5'-diphosphate. Involved in mRNA degradation. Catalyzes the phosphorolysis of single-stranded polyribonucleotides processively in the 3'- to 5'-direction. The polypeptide is Polyribonucleotide nucleotidyltransferase (Listeria innocua serovar 6a (strain ATCC BAA-680 / CLIP 11262)).